The chain runs to 120 residues: Late cornified envelope-like proline-rich protein 1 (120 aa).

Belongs to the cornifin (SPRR) family.

The sequence is that of Late cornified envelope-like proline-rich protein 1 (Lelp1) from Mus musculus (Mouse).